The sequence spans 242 residues: Glucosamine-6-phosphate deaminase (242 aa).

Catalysis depends on aspartate 67, which acts as the Proton acceptor; for enolization step. Asparagine 137 acts as the For ring-opening step in catalysis. Catalysis depends on histidine 139, which acts as the Proton acceptor; for ring-opening step. Glutamate 144 functions as the For ring-opening step in the catalytic mechanism.

It belongs to the glucosamine/galactosamine-6-phosphate isomerase family. NagB subfamily.

The enzyme catalyses alpha-D-glucosamine 6-phosphate + H2O = beta-D-fructose 6-phosphate + NH4(+). Its pathway is amino-sugar metabolism; N-acetylneuraminate degradation; D-fructose 6-phosphate from N-acetylneuraminate: step 5/5. Its function is as follows. Catalyzes the reversible isomerization-deamination of glucosamine 6-phosphate (GlcN6P) to form fructose 6-phosphate (Fru6P) and ammonium ion. The polypeptide is Glucosamine-6-phosphate deaminase (Staphylococcus haemolyticus (strain JCSC1435)).